The following is a 428-amino-acid chain: Histidinol dehydrogenase (428 aa).

NAD(+)-binding residues include Tyr127, Gln189, and Asn212. 3 residues coordinate substrate: Ser235, Gln257, and His260. Residues Gln257 and His260 each coordinate Zn(2+). Catalysis depends on proton acceptor residues Glu325 and His326. The substrate site is built by His326, Asp359, Glu413, and His418. Asp359 contacts Zn(2+). His418 is a binding site for Zn(2+).

Belongs to the histidinol dehydrogenase family. Zn(2+) is required as a cofactor.

It carries out the reaction L-histidinol + 2 NAD(+) + H2O = L-histidine + 2 NADH + 3 H(+). Its pathway is amino-acid biosynthesis; L-histidine biosynthesis; L-histidine from 5-phospho-alpha-D-ribose 1-diphosphate: step 9/9. Its function is as follows. Catalyzes the sequential NAD-dependent oxidations of L-histidinol to L-histidinaldehyde and then to L-histidine. In Prochlorococcus marinus subsp. pastoris (strain CCMP1986 / NIES-2087 / MED4), this protein is Histidinol dehydrogenase.